The primary structure comprises 350 residues: Selenide, water dikinase (350 aa).

Sec-15 is an active-site residue. Sec-15 is a non-standard amino acid (selenocysteine). ATP is bound by residues Lys-18 and 47–49; that span reads HNE. Position 50 (Asp-50) interacts with Mg(2+). Residues Asp-67, Asp-90, and 138 to 140 contribute to the ATP site; that span reads GHS. A Mg(2+)-binding site is contributed by Asp-90. Residue Asp-227 participates in Mg(2+) binding.

Belongs to the selenophosphate synthase 1 family. Class I subfamily. Homodimer. It depends on Mg(2+) as a cofactor.

It carries out the reaction hydrogenselenide + ATP + H2O = selenophosphate + AMP + phosphate + 2 H(+). In terms of biological role, synthesizes selenophosphate from selenide and ATP. This Nitratidesulfovibrio vulgaris (strain DSM 19637 / Miyazaki F) (Desulfovibrio vulgaris) protein is Selenide, water dikinase.